The following is a 534-amino-acid chain: High-affinity nicotinic acid transporter (534 aa).

The Extracellular portion of the chain corresponds to 1–130; the sequence is MSNKFTMESP…DIHLVGTQYN (130 aa). Residues 21–56 are disordered; that stretch reads SPTNDGSEEKPTEVTFQEDEGHDASLHNRSHDKKSE. At serine 27 the chain carries Phosphoserine. The helical transmembrane segment at 131–151 threads the bilayer; sequence TCVTVFFATYVLFDPIGTNLL. Lysine 152 is a topological domain (cytoplasmic). The helical transmembrane segment at 153-173 threads the bilayer; the sequence is IMGPPLMMSICLTCFGAISLG. The Extracellular segment spans residues 174 to 187; that stretch reads TAWVKNYAQLIVVR. A helical membrane pass occupies residues 188–208; that stretch reads LLLGAFEGMIYPAINMYLSVC. Residues 209-217 lie on the Cytoplasmic side of the membrane; the sequence is YRREQYALR. The helical transmembrane segment at 218-238 threads the bilayer; that stretch reads FAFVFSAACLSSSFGGLIAYG. The Extracellular portion of the chain corresponds to 239–250; the sequence is CSKISGSLKDWQ. The chain crosses the membrane as a helical span at residues 251-271; the sequence is YIYIVEGCISLGFVPFYAFGL. Topologically, residues 272–323 are cytoplasmic; sequence SKNLEDSWFFNKEEKEYISERYKTMNTFDPDEKFEWFQVWQAVKDVKTWASA. Lysine 283 is covalently cross-linked (Glycyl lysine isopeptide (Lys-Gly) (interchain with G-Cter in ubiquitin)). Residues 324–344 form a helical membrane-spanning segment; sequence VALFGIDLTTFGLTVFLPIII. Over 345–355 the chain is Extracellular; the sequence is TSMGFTNVRAQ. The helical transmembrane segment at 356 to 376 threads the bilayer; it reads LMTVPIYFLTAIVFFICAVWS. Residues 377–384 lie on the Cytoplasmic side of the membrane; sequence DRIKLRSP. Residues 385-405 traverse the membrane as a helical segment; it reads FILGACLTTSIGIAIVLGSQV. At 406 to 410 the chain is on the extracellular side; it reads HGVRY. A helical membrane pass occupies residues 411–431; the sequence is FGVYILCMGIYVNAACNCLWL. Topologically, residues 432 to 444 are cytoplasmic; the sequence is SGNTGNYFKRATA. Residues 445-465 form a helical membrane-spanning segment; the sequence is LGINLFFGSGSGLVSGQIFVA. At 466–474 the chain is on the extracellular side; sequence KDKPRYIKG. The helical transmembrane segment at 475 to 495 threads the bilayer; sequence LSISLAFQVFSIFMTVVQIFL. Residues 496-534 lie on the Cytoplasmic side of the membrane; it reads YKRENDKKKAIIDRCNELGEPIPYDERLSDKNPEFKYMY.

The protein belongs to the major facilitator superfamily. Allantoate permease family.

It localises to the membrane. Its function is as follows. Involved in the uptake of nicotinic acid. The polypeptide is High-affinity nicotinic acid transporter (TNA1) (Saccharomyces cerevisiae (strain ATCC 204508 / S288c) (Baker's yeast)).